The following is a 673-amino-acid chain: DNA ligase (673 aa).

NAD(+)-binding positions include 34-38, 83-84, and glutamate 116; these read DAEYD and SL. Lysine 118 functions as the N6-AMP-lysine intermediate in the catalytic mechanism. Residues arginine 139, glutamate 176, lysine 293, and lysine 317 each coordinate NAD(+). Positions 411, 414, 429, and 435 each coordinate Zn(2+). The region spanning 595–673 is the BRCT domain; it reads NQQNPFFGKT…EDEFLKWVNS (79 aa).

This sequence belongs to the NAD-dependent DNA ligase family. LigA subfamily. Mg(2+) is required as a cofactor. Requires Mn(2+) as cofactor.

The enzyme catalyses NAD(+) + (deoxyribonucleotide)n-3'-hydroxyl + 5'-phospho-(deoxyribonucleotide)m = (deoxyribonucleotide)n+m + AMP + beta-nicotinamide D-nucleotide.. In terms of biological role, DNA ligase that catalyzes the formation of phosphodiester linkages between 5'-phosphoryl and 3'-hydroxyl groups in double-stranded DNA using NAD as a coenzyme and as the energy source for the reaction. It is essential for DNA replication and repair of damaged DNA. The polypeptide is DNA ligase (Legionella pneumophila (strain Paris)).